Consider the following 388-residue polypeptide: Mitochondrial distribution and morphology protein 12 (388 aa).

The 388-residue stretch at 1-388 (MSLDINWSLL…VFPNFHTVAL (388 aa)) folds into the SMP-LTD domain. 2 disordered regions span residues 75–101 (DDEG…RNEA) and 209–251 (PMSI…SSSS). Residues 83–101 (EEKQREKEREERDKLRNEA) are compositionally biased toward basic and acidic residues. Pro residues predominate over residues 234–243 (PSPPAHPAGL).

The protein belongs to the MDM12 family. Component of the ER-mitochondria encounter structure (ERMES) or MDM complex, composed of MMM1, MDM10, MDM12 and MDM34. An MMM1 homodimer associates with one molecule of MDM12 on each side in a pairwise head-to-tail manner, and the SMP-LTD domains of MMM1 and MDM12 generate a continuous hydrophobic tunnel for phospholipid trafficking.

It localises to the mitochondrion outer membrane. Its subcellular location is the endoplasmic reticulum membrane. Component of the ERMES/MDM complex, which serves as a molecular tether to connect the endoplasmic reticulum (ER) and mitochondria. Components of this complex are involved in the control of mitochondrial shape and protein biogenesis, and function in nonvesicular lipid trafficking between the ER and mitochondria. MDM12 is required for the interaction of the ER-resident membrane protein MMM1 and the outer mitochondrial membrane-resident beta-barrel protein MDM10. The MDM12-MMM1 subcomplex functions in the major beta-barrel assembly pathway that is responsible for biogenesis of all mitochondrial outer membrane beta-barrel proteins, and acts in a late step after the SAM complex. The MDM10-MDM12-MMM1 subcomplex further acts in the TOM40-specific pathway after the action of the MDM12-MMM1 complex. Essential for establishing and maintaining the structure of mitochondria and maintenance of mtDNA nucleoids. In Cryptococcus neoformans var. neoformans serotype D (strain B-3501A) (Filobasidiella neoformans), this protein is Mitochondrial distribution and morphology protein 12.